Reading from the N-terminus, the 353-residue chain is Inositol 3-kinase (353 aa).

ATP is bound by residues Ser-197, 247–250, and Asn-274; that span reads GAGD. Asp-250 serves as the catalytic Proton acceptor.

Belongs to the carbohydrate kinase pfkB family.

The enzyme catalyses myo-inositol + ATP = 1D-myo-inositol 3-phosphate + ADP + H(+). Functionally, kinase that phosphorylates myo-inositol to produce multiple myo-inositol monophosphates. Participates in phytic acid biosynthesis in developing seeds. Phytic acid is the primary storage form of phosphorus in cereal grains and other plant seeds. The protein is Inositol 3-kinase of Arabidopsis thaliana (Mouse-ear cress).